A 680-amino-acid polypeptide reads, in one-letter code: Protein FAR1-RELATED SEQUENCE 11 (680 aa).

Positions 1 to 36 are disordered; sequence MSDDPGQMLLIYDDPSDQRSLSLDDASSTEESPDDN. The FAR1 domain occupies 62–156; sequence EFYSTFAKRC…ANHHNHELLE (95 aa). Residues 277–373 enclose the MULE domain; that stretch reads AVVFDTTHRL…CIWMVVGKFP (97 aa). Residues 556–589 form an SWIM-type zinc finger; it reads YWVPQEGIISCSCQLFEFSGFLCRHALRVLSTGN.

The protein belongs to the FHY3/FAR1 family. In terms of tissue distribution, expressed in hypocotyls, rosette and cauline leaves, inflorescences stems, flowers and siliques.

Its subcellular location is the nucleus. Putative transcription activator involved in regulating light control of development. The polypeptide is Protein FAR1-RELATED SEQUENCE 11 (FRS11) (Arabidopsis thaliana (Mouse-ear cress)).